Here is an 85-residue protein sequence, read N- to C-terminus: Probable weak neurotoxin 3FTx-Lio1 (85 aa).

The N-terminal stretch at 1-18 (MKAVILSLVAAFLYSGYT) is a signal peptide. Disulfide bonds link cysteine 21-cysteine 42, cysteine 24-cysteine 29, cysteine 35-cysteine 60, cysteine 64-cysteine 75, and cysteine 76-cysteine 81.

This sequence belongs to the three-finger toxin family. Ancestral subfamily. In terms of tissue distribution, expressed by the venom gland.

The protein resides in the secreted. The polypeptide is Probable weak neurotoxin 3FTx-Lio1 (Erythrolamprus poecilogyrus (Water snake)).